A 360-amino-acid polypeptide reads, in one-letter code: Peptide chain release factor 1 (360 aa).

Glutamine 236 carries the post-translational modification N5-methylglutamine. Residues 288–308 (QDEQDAERKSTIGTGDRSERI) form a disordered region. The span at 293–308 (AERKSTIGTGDRSERI) shows a compositional bias: basic and acidic residues.

It belongs to the prokaryotic/mitochondrial release factor family. In terms of processing, methylated by PrmC. Methylation increases the termination efficiency of RF1.

Its subcellular location is the cytoplasm. Functionally, peptide chain release factor 1 directs the termination of translation in response to the peptide chain termination codons UAG and UAA. This Streptococcus equi subsp. equi (strain 4047) protein is Peptide chain release factor 1.